We begin with the raw amino-acid sequence, 61 residues long: Large ribosomal subunit protein bL32 (61 aa).

Over residues 1 to 19 the composition is skewed to basic residues; it reads MAHPKRRQSKTRTAKRRTH. Residues 1–20 are disordered; sequence MAHPKRRQSKTRTAKRRTHD.

It belongs to the bacterial ribosomal protein bL32 family.

This Bacteroides fragilis (strain YCH46) protein is Large ribosomal subunit protein bL32.